Consider the following 457-residue polypeptide: Carboxypeptidase N catalytic chain (457 aa).

An N-terminal signal peptide occupies residues 1 to 23; it reads MPDLPSAFLPLLLLSKFVTPVTF. The region spanning 24–338 is the Peptidase M14 domain; that stretch reads RHHRYDDLVR…EALIQFLEQV (315 aa). A disulfide bridge links Cys42 with Cys104. The Zn(2+) site is built by His86, Glu89, and His216. Cys271 and Cys311 are joined by a disulfide. Glu308 serves as the catalytic Proton donor/acceptor. 3 O-linked (GalNAc...) threonine glycosylation sites follow: Thr400, Thr402, and Thr409. The interval 418–457 is disordered; it reads STTQVHPVQKAPGRGQGSRAKQPRTSRKKDQAAKRHRGPA.

This sequence belongs to the peptidase M14 family. As to quaternary structure, tetramer of two catalytic chains and two glycosylated inactive chains. Zn(2+) serves as cofactor. In terms of tissue distribution, plasma. Expressed in liver.

It localises to the secreted. It is found in the extracellular space. The enzyme catalyses Release of a C-terminal basic amino acid, preferentially lysine.. In terms of biological role, protects the body from potent vasoactive and inflammatory peptides containing C-terminal Arg or Lys (such as kinins or anaphylatoxins) which are released into the circulation. The chain is Carboxypeptidase N catalytic chain (Cpn1) from Rattus norvegicus (Rat).